We begin with the raw amino-acid sequence, 490 residues long: Phosphoglucosamine mutase (490 aa).

The Phosphoserine intermediate role is filled by Ser-139. 4 residues coordinate Mg(2+): Ser-139, Asp-279, Asp-281, and Asp-283. Ser-139 is subject to Phosphoserine.

It belongs to the phosphohexose mutase family. Requires Mg(2+) as cofactor. Activated by phosphorylation.

It catalyses the reaction alpha-D-glucosamine 1-phosphate = D-glucosamine 6-phosphate. Its function is as follows. Catalyzes the conversion of glucosamine-6-phosphate to glucosamine-1-phosphate. The chain is Phosphoglucosamine mutase from Nostoc sp. (strain PCC 7120 / SAG 25.82 / UTEX 2576).